The following is a 549-amino-acid chain: TBC1 domain family member 3 (549 aa).

The region spanning Gly101–Gly293 is the Rab-GAP TBC domain. Residues Cys318 and Cys325 are each lipidated (S-palmitoyl cysteine). Positions Leu350–Gly419 are disordered. The segment covering Pro398–Pro417 has biased composition (low complexity).

Post-translationally, ubiquitinated by a CUL7-based E3 ligase, which leads to proteasomal degradation. Palmitoylation is required for membrane localization and protects TBC1D3 from ubiquitination. Expressed in liver, skeletal muscle, kidney, pancreas, spleen, testis, ovary, small intestine and peripheral blood leukocytes. Overexpressed in prostate cancers.

The protein resides in the cell membrane. In terms of biological role, acts as a GTPase activating protein for RAB5. Does not act on RAB4 or RAB11. The sequence is that of TBC1 domain family member 3 (TBC1D3) from Homo sapiens (Human).